The chain runs to 576 residues: RING finger and SPRY domain-containing protein 1 (576 aa).

The first 16 residues, 1-16 (MIVFGWAVFLASRSLG), serve as a signal peptide directing secretion. The residue at position 50 (Ser50) is a Phosphoserine. A disordered region spans residues 50 to 99 (SGTDDSVDTQQQQAENSAVPTADTRSQPRDPVRPPRRGRGPHEPRRKKQN). Residues 57-68 (DTQQQQAENSAV) show a composition bias toward polar residues. A compositionally biased stretch (basic residues) spans 83 to 97 (PPRRGRGPHEPRRKK). The B30.2/SPRY domain occupies 300–483 (LFLKEGRQLT…CEFNFGAKPF (184 aa)). Residue Asn314 is glycosylated (N-linked (GlcNAc...) asparagine). The RING-type zinc finger occupies 527-562 (CSLCCDEVADTQLKPCGHSDLCMDCALQLETCPLCR).

It localises to the secreted. This Homo sapiens (Human) protein is RING finger and SPRY domain-containing protein 1 (RSPRY1).